The chain runs to 148 residues: UPF0178 protein SUN_1096 (148 aa).

This sequence belongs to the UPF0178 family.

This Sulfurovum sp. (strain NBC37-1) protein is UPF0178 protein SUN_1096.